A 436-amino-acid chain; its full sequence is tRNA pseudouridine synthase Pus10 (436 aa).

Asp-254 functions as the Nucleophile in the catalytic mechanism. Residues Tyr-322 and Tyr-394 each coordinate substrate.

Belongs to the pseudouridine synthase Pus10 family.

It carries out the reaction uridine(54) in tRNA = pseudouridine(54) in tRNA. The enzyme catalyses uridine(55) in tRNA = pseudouridine(55) in tRNA. In terms of biological role, responsible for synthesis of pseudouridine from uracil-54 and uracil-55 in the psi GC loop of transfer RNAs. The polypeptide is tRNA pseudouridine synthase Pus10 (Methanopyrus kandleri (strain AV19 / DSM 6324 / JCM 9639 / NBRC 100938)).